A 95-amino-acid chain; its full sequence is Small ubiquitin-related modifier 4 (95 aa).

The Ubiquitin-like domain maps to 17–95 (HINLKVAGQD…VFQQPTGGVY (79 aa)). Residue G93 forms a Glycyl lysine isopeptide (Gly-Lys) (interchain with K-? in acceptor proteins) linkage. The propeptide occupies 94 to 95 (VY).

The protein belongs to the ubiquitin family. SUMO subfamily. In terms of assembly, interacts with SAE2. Covalently attached to a number of proteins. In contrast to SUMO1, SUMO2 and SUMO3, seems to be insensitive to sentrin-specific proteases due to the presence of Pro-90. This may impair processing to mature form and conjugation to substrates. Expressed mainly in adult and embryonic kidney. Expressed at various levels in immune tissues, with the highest expression in the lymph node and spleen.

Ubiquitin-like protein which can be covalently attached to target lysines as a monomer. Does not seem to be involved in protein degradation and may modulate protein subcellular localization, stability or activity. Upon oxidative stress, conjugates to various anti-oxidant enzymes, chaperones, and stress defense proteins. May also conjugate to NFKBIA, TFAP2A and FOS, negatively regulating their transcriptional activity, and to NR3C1, positively regulating its transcriptional activity. Covalent attachment to its substrates requires prior activation by the E1 complex SAE1-SAE2 and linkage to the E2 enzyme UBE2I. In Homo sapiens (Human), this protein is Small ubiquitin-related modifier 4 (SUMO4).